The chain runs to 438 residues: uncharacterized protein (438 aa).

His-59 contributes to the Zn(2+) binding site. Glu-62 acts as the Proton acceptor in catalysis. Positions 63 and 139 each coordinate Zn(2+).

It belongs to the peptidase M16 family. Zn(2+) serves as cofactor.

This is an uncharacterized protein from Mycobacterium bovis (strain ATCC BAA-935 / AF2122/97).